Reading from the N-terminus, the 184-residue chain is V-type proton ATPase subunit E (184 aa).

This sequence belongs to the V-ATPase E subunit family.

Its function is as follows. Produces ATP from ADP in the presence of a proton gradient across the membrane. In Finegoldia magna (strain ATCC 29328 / DSM 20472 / WAL 2508) (Peptostreptococcus magnus), this protein is V-type proton ATPase subunit E.